We begin with the raw amino-acid sequence, 390 residues long: GTPase Obg (390 aa).

The Obg domain maps to 1 to 159; the sequence is MKFVDEASIL…RELLLELMLL (159 aa). The tract at residues 127 to 147 is disordered; sequence NTRFKSSVNRTPRQKTNGTPG. Polar residues predominate over residues 129–145; it reads RFKSSVNRTPRQKTNGT. In terms of domain architecture, OBG-type G spans 160–333; that stretch reads ADVGMLGMPN…LCWDVMTFII (174 aa). GTP contacts are provided by residues 166–173, 191–195, 213–216, 283–286, and 314–316; these read GMPNAGKS, FTTLV, DIPG, NKID, and SAA. Mg(2+) is bound by residues serine 173 and threonine 193.

Belongs to the TRAFAC class OBG-HflX-like GTPase superfamily. OBG GTPase family. Monomer. It depends on Mg(2+) as a cofactor.

Its subcellular location is the cytoplasm. An essential GTPase which binds GTP, GDP and possibly (p)ppGpp with moderate affinity, with high nucleotide exchange rates and a fairly low GTP hydrolysis rate. Plays a role in control of the cell cycle, stress response, ribosome biogenesis and in those bacteria that undergo differentiation, in morphogenesis control. The protein is GTPase Obg of Escherichia coli O7:K1 (strain IAI39 / ExPEC).